The primary structure comprises 328 residues: Gonadotropin-releasing hormone receptor (328 aa).

Topologically, residues methionine 1–arginine 38 are extracellular. A glycan (N-linked (GlcNAc...) asparagine) is linked at asparagine 18. The chain crosses the membrane as a helical span at residues valine 39 to methionine 58. The Cytoplasmic portion of the chain corresponds to lysine 59–lysine 77. Residues valine 78–leucine 97 form a helical membrane-spanning segment. Residues aspartate 98 to lysine 115 lie on the Extracellular side of the membrane. An N-linked (GlcNAc...) asparagine glycan is attached at asparagine 102. Cysteine 114 and cysteine 196 are joined by a disulfide. The helical transmembrane segment at alanine 116–leucine 137 threads the bilayer. The Cytoplasmic portion of the chain corresponds to aspartate 138–tryptophan 164. Residues phenylalanine 165–glutamate 184 form a helical membrane-spanning segment. Topologically, residues aspartate 185 to asparagine 212 are extracellular. An N-linked (GlcNAc...) asparagine glycan is attached at asparagine 192. A helical transmembrane segment spans residues leucine 213–alanine 232. At lysine 233–threonine 281 the chain is on the cytoplasmic side. The chain crosses the membrane as a helical span at residues proline 282–valine 300. Topologically, residues serine 301–histidine 306 are extracellular. Residues phenylalanine 307–phenylalanine 326 traverse the membrane as a helical segment. The Cytoplasmic segment spans residues serine 327–leucine 328.

Belongs to the G-protein coupled receptor 1 family.

Its subcellular location is the cell membrane. Functionally, receptor for gonadotropin releasing hormone (GnRH) that mediates the action of GnRH to stimulate the secretion of the gonadotropic hormones luteinizing hormone (LH) and follicle-stimulating hormone (FSH). This receptor mediates its action by association with G-proteins that activate a phosphatidylinositol-calcium second messenger system. This is Gonadotropin-releasing hormone receptor (GNRHR) from Trichosurus vulpecula (Brush-tailed possum).